A 1792-amino-acid chain; its full sequence is uncharacterized protein (1792 aa).

Residues 1 to 28 (MNNNNNNNNNSNNNNNSNNNNNGNSNNN) show a composition bias toward low complexity. Disordered stretches follow at residues 1–34 (MNNN…SGKG), 162–187 (TNIS…SHHH), 440–461 (KKRK…NKSS), 544–568 (VIDD…SIIN), 736–777 (NKNK…INSN), 837–979 (TKGK…NDLK), 1044–1071 (VSKS…KEQS), 1084–1106 (NMNN…NDNK), 1160–1215 (TSSG…VLER), 1257–1290 (NITA…NNNG), 1651–1686 (LRSK…GRKK), 1704–1731 (PRKK…NSEK), and 1742–1761 (IENK…NLNN). Residues 169-182 (KQPISSNQHPYQQK) are compositionally biased toward polar residues. Over residues 550 to 559 (KRNKKEKKKT) the composition is skewed to basic residues. The span at 741-776 (PNNINSNDNNNKNDDNNNNNNKNVDGNNNNNNNINS) shows a compositional bias: low complexity. A compositionally biased stretch (basic residues) spans 838–847 (KGKKKGRKKK). The span at 856-873 (NIKEDIKSSKKDKKKDNI) shows a compositional bias: basic and acidic residues. Low complexity predominate over residues 874–924 (NDNNNDNNNDNNNDNNNDNNNDNNNDNNNDNNNNNNNNNNNNNNNNNNNHN). The span at 943–954 (KKKTRQYRKKSK) shows a compositional bias: basic residues. A compositionally biased stretch (basic and acidic residues) spans 955–966 (ITNDDNNEKIKQ). Low complexity predominate over residues 1045–1057 (SKSNIPSSFSSPP). Composition is skewed to basic and acidic residues over residues 1060–1071 (TNNKNDIDKEQS), 1088–1106 (EKSK…NDNK), and 1166–1192 (NKEE…KNVD). The span at 1205–1215 (RKKRKKDVLER) shows a compositional bias: basic residues. Residues 1261 to 1289 (NNNNDNNKNNDNDNNNNNNDNIINNNNNN) show a composition bias toward low complexity. Composition is skewed to basic residues over residues 1660-1686 (KEHK…GRKK) and 1704-1717 (PRKK…RKSK).

This is an uncharacterized protein from Plasmodium falciparum (isolate 3D7).